The following is a 406-amino-acid chain: Proteasome-activating nucleotidase 1 (406 aa).

Positions Met1–Tyr12 are enriched in acidic residues. The disordered stretch occupies residues Met1–Asp20. Residues Tyr12 to Ser70 are a coiled coil. Residues Gly192 to Leu197 and His331 each bind ATP. Positions Ala385–Ala406 are disordered. Residues Thr404–Ala406 form a docks into pockets in the proteasome alpha-ring to cause gate opening region.

It belongs to the AAA ATPase family. In terms of assembly, homohexamer. The hexameric complex has a two-ring architecture resembling a top hat that caps the 20S proteasome core at one or both ends. Upon ATP-binding, the C-terminus of PAN interacts with the alpha-rings of the proteasome core by binding to the intersubunit pockets.

The protein resides in the cytoplasm. ATPase which is responsible for recognizing, binding, unfolding and translocation of substrate proteins into the archaeal 20S proteasome core particle. Is essential for opening the gate of the 20S proteasome via an interaction with its C-terminus, thereby allowing substrate entry and access to the site of proteolysis. Thus, the C-termini of the proteasomal ATPase function like a 'key in a lock' to induce gate opening and therefore regulate proteolysis. Unfolding activity requires energy from ATP hydrolysis, whereas ATP binding alone promotes ATPase-20S proteasome association which triggers gate opening, and supports translocation of unfolded substrates. In Halobacterium salinarum (strain ATCC 700922 / JCM 11081 / NRC-1) (Halobacterium halobium), this protein is Proteasome-activating nucleotidase 1.